The primary structure comprises 197 residues: Small ribosomal subunit protein uS4y (197 aa).

Residues 109 to 183 (RRLQTIVFKS…VKRRNERAGA (75 aa)) form the S4 RNA-binding domain. The tract at residues 161 to 197 (SLTSPFGGGRPGRVKRRNERAGAKKASGGDGDEDDEE) is disordered.

Belongs to the universal ribosomal protein uS4 family. As to quaternary structure, binds to the translation initiation factors TIF3E1.

This Arabidopsis thaliana (Mouse-ear cress) protein is Small ribosomal subunit protein uS4y (RPS9C).